The primary structure comprises 327 residues: Tetraspanin-4 (327 aa).

Residues 1-6 (MRSRSN) are Cytoplasmic-facing. Residues 7–27 (LIGLINFFTFLLSIPILGGGI) form a helical membrane-spanning segment. At 28–43 (WLSSRANSTDCLRFLQ) the chain is on the extracellular side. An N-linked (GlcNAc...) asparagine glycan is attached at N34. The helical transmembrane segment at 44-64 (WPLIIIGISIMVISLAGIAGA) threads the bilayer. The Cytoplasmic segment spans residues 65–75 (CYQNKFLMWLY). Residues 76–96 (LFTMFFVIAALIGFTIFAYVV) traverse the membrane as a helical segment. At 97–235 (TDKGSGRFVM…LGSLKKSWRK (139 aa)) the chain is on the extracellular side. N187 carries N-linked (GlcNAc...) asparagine glycosylation. The helical transmembrane segment at 236–256 (VSVINIVVVIILVIFYVIACA) threads the bilayer. Residues 257–287 (AYQNVKRMYNDEPVGEARMTNLILVIFKFKE) are Cytoplasmic-facing. The chain crosses the membrane as a helical span at residues 288–308 (ILVQFFFGIVFLLLFNGLMVC). Residues 309 to 327 (CCNDKFAFSVFFFGYVTYA) lie on the Extracellular side of the membrane.

It belongs to the tetraspanin (TM4SF) family.

It localises to the membrane. Functionally, may be involved in the regulation of cell differentiation. This is Tetraspanin-4 (TET4) from Arabidopsis thaliana (Mouse-ear cress).